We begin with the raw amino-acid sequence, 336 residues long: Glycerol-3-phosphate dehydrogenase [NAD(P)+] (336 aa).

Residues Trp11, Arg33, and Lys105 each contribute to the NADPH site. Lys105, Gly141, and Ser143 together coordinate sn-glycerol 3-phosphate. Ala145 provides a ligand contact to NADPH. Residues Lys196, Asp249, Ser259, Arg260, and Asn261 each coordinate sn-glycerol 3-phosphate. Catalysis depends on Lys196, which acts as the Proton acceptor. An NADPH-binding site is contributed by Arg260. Residues Val284 and Glu286 each contribute to the NADPH site.

The protein belongs to the NAD-dependent glycerol-3-phosphate dehydrogenase family.

Its subcellular location is the cytoplasm. The catalysed reaction is sn-glycerol 3-phosphate + NAD(+) = dihydroxyacetone phosphate + NADH + H(+). It catalyses the reaction sn-glycerol 3-phosphate + NADP(+) = dihydroxyacetone phosphate + NADPH + H(+). It functions in the pathway membrane lipid metabolism; glycerophospholipid metabolism. Catalyzes the reduction of the glycolytic intermediate dihydroxyacetone phosphate (DHAP) to sn-glycerol 3-phosphate (G3P), the key precursor for phospholipid synthesis. This is Glycerol-3-phosphate dehydrogenase [NAD(P)+] from Delftia acidovorans (strain DSM 14801 / SPH-1).